The chain runs to 487 residues: Protein nucleotidyltransferase YdiU (487 aa).

ATP-binding residues include Gly-90, Gly-92, Arg-93, Lys-113, Asp-125, Gly-126, Arg-176, and Arg-183. The Proton acceptor role is filled by Asp-252. The Mg(2+) site is built by Asn-253 and Asp-262. Residue Asp-262 coordinates ATP.

It belongs to the SELO family. Mg(2+) serves as cofactor. It depends on Mn(2+) as a cofactor.

It carries out the reaction L-seryl-[protein] + ATP = 3-O-(5'-adenylyl)-L-seryl-[protein] + diphosphate. The catalysed reaction is L-threonyl-[protein] + ATP = 3-O-(5'-adenylyl)-L-threonyl-[protein] + diphosphate. It catalyses the reaction L-tyrosyl-[protein] + ATP = O-(5'-adenylyl)-L-tyrosyl-[protein] + diphosphate. The enzyme catalyses L-histidyl-[protein] + UTP = N(tele)-(5'-uridylyl)-L-histidyl-[protein] + diphosphate. It carries out the reaction L-seryl-[protein] + UTP = O-(5'-uridylyl)-L-seryl-[protein] + diphosphate. The catalysed reaction is L-tyrosyl-[protein] + UTP = O-(5'-uridylyl)-L-tyrosyl-[protein] + diphosphate. In terms of biological role, nucleotidyltransferase involved in the post-translational modification of proteins. It can catalyze the addition of adenosine monophosphate (AMP) or uridine monophosphate (UMP) to a protein, resulting in modifications known as AMPylation and UMPylation. This is Protein nucleotidyltransferase YdiU from Azotobacter vinelandii (strain DJ / ATCC BAA-1303).